A 228-amino-acid polypeptide reads, in one-letter code: Chaperone protein FanE (228 aa).

The N-terminal stretch at 1 to 19 is a signal peptide; sequence MNKFISIIALCVFSSYANA. Cysteines 157 and 198 form a disulfide.

Belongs to the periplasmic pilus chaperone family.

It localises to the periplasm. Functionally, mediates assembly of pili by forming soluble multimeric complexes with pili subunits as an intermediate step in the assembly process. This protein is involved in K99 pili assembly. The chain is Chaperone protein FanE (fanE) from Escherichia coli.